A 424-amino-acid chain; its full sequence is Histidine--tRNA ligase (424 aa).

Belongs to the class-II aminoacyl-tRNA synthetase family. As to quaternary structure, homodimer.

It localises to the cytoplasm. It carries out the reaction tRNA(His) + L-histidine + ATP = L-histidyl-tRNA(His) + AMP + diphosphate + H(+). The sequence is that of Histidine--tRNA ligase from Salmonella paratyphi B (strain ATCC BAA-1250 / SPB7).